The following is a 309-amino-acid chain: Taste receptor type 2 member 124 (309 aa).

At 1–7 (MVPVLHS) the chain is on the extracellular side. The chain crosses the membrane as a helical span at residues 8–28 (LSTIILIAEFVWGNLSNGLIV). The Cytoplasmic portion of the chain corresponds to 29 to 46 (LKNCIDWINKKELSTVDQ). A helical transmembrane segment spans residues 47–67 (ILIVLAISRISLIWETLIIWV). The Extracellular segment spans residues 68–86 (KDQLISSITIEELKIIVFS). A helical transmembrane segment spans residues 87-107 (FILSSHFSLWLATALSIFYLF). At 108–127 (RIPNCYWQIFLYLKWRIKQL) the chain is on the cytoplasmic side. A helical transmembrane segment spans residues 128–148 (IVHMLLGSLVFLVANMIQITI). At 149-183 (TLEERFYQYGGNTSVNSMETEFSILIELMLFNMTM) the chain is on the extracellular side. 2 N-linked (GlcNAc...) asparagine glycosylation sites follow: Asn-160 and Asn-180. The helical transmembrane segment at 184–204 (FSIIPFSLALISFLLLIFSLW) threads the bilayer. Residues 205-230 (KHLQKMPLNSRGDRDPSATAHRNALR) are Cytoplasmic-facing. A helical transmembrane segment spans residues 231-251 (ILVSFLLLYTIYFLSLLISWV). Topologically, residues 252-261 (AQKNQSELVH) are extracellular. Asn-255 is a glycosylation site (N-linked (GlcNAc...) asparagine). Residues 262–282 (IICMITSLVYPSFHSYILILG) form a helical membrane-spanning segment. Over 283-309 (NYKLKQTSLWVMRQLGCRMKRQNTPTT) the chain is Cytoplasmic.

The protein belongs to the G-protein coupled receptor T2R family.

It localises to the membrane. Putative taste receptor which may play a role in the perception of bitterness. This is Taste receptor type 2 member 124 from Mus musculus (Mouse).